A 103-amino-acid polypeptide reads, in one-letter code: UPF0145 protein PBPRB0184 (103 aa).

This sequence belongs to the UPF0145 family.

The chain is UPF0145 protein PBPRB0184 from Photobacterium profundum (strain SS9).